The primary structure comprises 344 residues: Anamorsin homolog 1 (344 aa).

Residues methionine 1 to lysine 169 are N-terminal SAM-like domain. The segment at lysine 170–leucine 233 is linker. Positions 244, 251, 254, and 256 each coordinate [2Fe-2S] cluster. Residues cysteine 244–cysteine 256 form a fe-S binding site A region. Cysteine 282, cysteine 285, cysteine 293, and cysteine 296 together coordinate [4Fe-4S] cluster. Short sequence motifs (cx2C motif) lie at residues cysteine 282–cysteine 285 and cysteine 293–cysteine 296. The fe-S binding site B stretch occupies residues cysteine 282–cysteine 296.

Belongs to the anamorsin family. In terms of assembly, monomer. The cofactor is [2Fe-2S] cluster. [4Fe-4S] cluster is required as a cofactor.

The protein localises to the cytoplasm. It localises to the mitochondrion intermembrane space. Component of the cytosolic iron-sulfur (Fe-S) protein assembly (CIA) machinery. Required for the maturation of extramitochondrial Fe-S proteins. Part of an electron transfer chain functioning in an early step of cytosolic Fe-S biogenesis, facilitating the de novo assembly of a [4Fe-4S] cluster on the cytosolic Fe-S scaffold complex. Electrons are transferred from NADPH via a FAD- and FMN-containing diflavin oxidoreductase. Together with the diflavin oxidoreductase, also required for the assembly of the diferric tyrosyl radical cofactor of ribonucleotide reductase (RNR), probably by providing electrons for reduction during radical cofactor maturation in the catalytic small subunit. The chain is Anamorsin homolog 1 from Physcomitrium patens (Spreading-leaved earth moss).